A 312-amino-acid polypeptide reads, in one-letter code: Eukaryotic translation initiation factor 2 subunit 2 (312 aa).

Disordered regions lie at residues 26–104 (AALG…NLDM) and 125–146 (ADQADDDKSEDKENDEDNSSTW). Ser44 bears the Phosphoserine mark. Acidic residues-rich tracts occupy residues 90-102 (AASEEPEEEEINL) and 125-142 (ADQADDDKSEDKENDEDN). Ser133 carries the phosphoserine modification. A Phosphothreonine modification is found at Thr145. The segment at 260-284 (CHTCRSPETILQKDTRLFFLQCESC) adopts a C4-type zinc-finger fold.

This sequence belongs to the eIF-2-beta/eIF-5 family. Eukaryotic translation initiation factor 2 eIF2 is a heterotrimeric complex composed of an alpha, a beta and a gamma subunit.

The protein localises to the cytoplasm. It localises to the cytosol. Component of the eIF2 complex that functions in the early steps of protein synthesis by forming a ternary complex with GTP and initiator tRNA. This complex binds to a 40S ribosomal subunit, followed by mRNA binding to form a 43S pre-initiation complex (43S PIC). Junction of the 60S ribosomal subunit to form the 80S initiation complex is preceded by hydrolysis of the GTP bound to eIF2 and release of an eIF2-GDP binary complex. In order for eIF2 to recycle and catalyze another round of initiation, the GDP bound to eIF2 must exchange with GTP by way of a reaction catalyzed by eIF2B. The protein is Eukaryotic translation initiation factor 2 subunit 2 of Drosophila melanogaster (Fruit fly).